The sequence spans 76 residues: DNA-directed RNA polymerase subunit Rpo10 (76 aa).

The Zn(2+) site is built by Cys16, Cys19, Cys53, and Cys54.

This sequence belongs to the archaeal Rpo10/eukaryotic RPB10 RNA polymerase subunit family. As to quaternary structure, part of the RNA polymerase complex. It depends on Zn(2+) as a cofactor.

The protein localises to the cytoplasm. The enzyme catalyses RNA(n) + a ribonucleoside 5'-triphosphate = RNA(n+1) + diphosphate. In terms of biological role, DNA-dependent RNA polymerase (RNAP) catalyzes the transcription of DNA into RNA using the four ribonucleoside triphosphates as substrates. This Archaeoglobus fulgidus (strain ATCC 49558 / DSM 4304 / JCM 9628 / NBRC 100126 / VC-16) protein is DNA-directed RNA polymerase subunit Rpo10.